We begin with the raw amino-acid sequence, 605 residues long: UPF0313 protein GSU2873 (605 aa).

The Radical SAM core domain occupies 291–561 (AYEQIRASVT…LQKALLLWHL (271 aa)). [4Fe-4S] cluster is bound by residues Cys305, Cys309, and Cys312. Residues 586 to 605 (GGAAGGGGGRSGSGFRPGRT) are disordered. The segment covering 587–597 (GAAGGGGGRSG) has biased composition (gly residues).

The protein belongs to the UPF0313 family. Requires [4Fe-4S] cluster as cofactor.

This chain is UPF0313 protein GSU2873, found in Geobacter sulfurreducens (strain ATCC 51573 / DSM 12127 / PCA).